The chain runs to 152 residues: Protein-export protein SecB (152 aa).

The protein belongs to the SecB family. As to quaternary structure, homotetramer, a dimer of dimers. One homotetramer interacts with 1 SecA dimer.

It localises to the cytoplasm. Functionally, one of the proteins required for the normal export of preproteins out of the cell cytoplasm. It is a molecular chaperone that binds to a subset of precursor proteins, maintaining them in a translocation-competent state. It also specifically binds to its receptor SecA. This Rickettsia akari (strain Hartford) protein is Protein-export protein SecB.